Here is a 670-residue protein sequence, read N- to C-terminus: E3 ubiquitin-protein ligase TRAF7 (670 aa).

2 disordered regions span residues 1-37 (MSSG…FGPA) and 49-97 (GTST…SLHS). Composition is skewed to polar residues over residues 15–31 (GPSN…TRME) and 49–67 (GTST…STLA). Serine 61, serine 88, and serine 91 each carry phosphoserine. Residues 131–165 (CQLCCSVFKDPVITTCGHTFCRRCALKSEKCPVDN) form an RING-type zinc finger. Residues 222–276 (HEGSCDYRPVRCPNNPSCPPLLRMNLEAHLKECEHIKCPHSKYGCTFIGNQDTYE) form a TRAF-type zinc finger. 7 WD repeats span residues 394–433 (GHQG…KCQK), 437–474 (GHDG…KVNT), 477–513 (AHDN…LKLK), 515–554 (ELTG…CIHV), 557–594 (TSGG…QVRT), 597–638 (GHVG…CTQT), and 641–669 (RHQG…KVWT).

The protein belongs to the WD repeat TRAF7 family. As to quaternary structure, homodimer. Interacts with MAP3K3 and promotes the kinase activity of this enzyme. In terms of processing, phosphorylated by MAP3K3. Ubiquitinates itself upon phosphorylation. In terms of tissue distribution, ubiquitously expressed with high levels in skeletal muscle, heart, colon, spleen, kidney, liver and placenta.

It is found in the cytoplasmic vesicle. Its subcellular location is the cytoplasm. The protein resides in the nucleus. The enzyme catalyses S-ubiquitinyl-[E2 ubiquitin-conjugating enzyme]-L-cysteine + [acceptor protein]-L-lysine = [E2 ubiquitin-conjugating enzyme]-L-cysteine + N(6)-ubiquitinyl-[acceptor protein]-L-lysine.. It participates in protein modification; protein ubiquitination. Functionally, E3 ubiquitin and SUMO-protein ligase that plays a role in different biological processes such as innate immunity, inflammation or apoptosis. Potentiates MAP3K3-mediated activation of JUN/AP1 and DDIT3 transcriptional regulators. Negatively regulates MYB transcriptional activity by sequestering it to the cytosol via SUMOylation. Plays a role in the phosphorylation of MAPK1 and/or MAPK3, probably via its interaction with MAP3K3. Negatively regulates RLR-mediated innate immunity by promoting 'Lys-48'-linked ubiquitination of TBK1 through its RING domain to inhibit the cellular antiviral response. Promotes 'Lys-29'-linked polyubiquitination of NEMO/IKBKG and RELA leading to targeting these two proteins to lysosomal degradative pathways, reducing the transcriptional activity of NF-kappa-B. This is E3 ubiquitin-protein ligase TRAF7 (TRAF7) from Homo sapiens (Human).